Here is a 568-residue protein sequence, read N- to C-terminus: Calcium-dependent protein kinase 5 (568 aa).

A Protein kinase domain is found at 125–379 (EIDRYKLGKG…VEQVLKHRWF (255 aa)). Residues 131-139 (LGKGSYGNV) and K154 contribute to the ATP site. Residue D245 is the Proton acceptor of the active site. Positions 400-408 (KFKEFHKLC) match the J domain autoinhibitory motif motif. Positions 400–435 (KFKEFHKLCKIKKLAVTCIAYQLNEKDIGKLKKTFE) are j domain. A J domain EF-hand interaction motif motif is present at residues 409-418 (KIKKLAVTCI). EF-hand domains are found at residues 425-460 (KDIGKLKKTFEAFDHNGDGVLTISEIFQCLKVNDNE), 462-495 (DRELYFLLKQLDTDGNGLIDYTEFLAACLDHSIF), 496-531 (QQDVICRNAFNVFDLDGDGVITKDELFKILSFSAVQ), and 534-568 (FSKEIIENLIKEVDSNNDGFIDYDEFYKMMTGVKE). The Ca(2+) site is built by D438, N440, D442, E449, D473, D475, N477, E484, D509, D511, D513, E520, D547, N549, D551, and E558.

It belongs to the protein kinase superfamily. Ser/Thr protein kinase family. CDPK subfamily. The cofactor is Mg(2+). In terms of processing, may be palmitoylated. Autophosphorylated in vitro.

It localises to the cytoplasm. The protein localises to the cytoplasmic vesicle. It is found in the secretory vesicle. The protein resides in the microneme membrane. Its subcellular location is the cell membrane. The enzyme catalyses L-seryl-[protein] + ATP = O-phospho-L-seryl-[protein] + ADP + H(+). It catalyses the reaction L-threonyl-[protein] + ATP = O-phospho-L-threonyl-[protein] + ADP + H(+). Its activity is regulated as follows. Activated by calcium. Upon calcium binding to the EF-hand domains, the C-terminus of the junction domain (J domain) undergoes a conformational change which results in the dissociation of the pseudo-substrate inhibitory motif from the catalytic domain. This, in turn, may facilitate the autophosphorylation of the activation loop at Thr-285, which leads to the kinase activation. In terms of biological role, calcium-dependent protein kinase which acts as a sensor and effector of intracellular Ca(2+) levels probably in part downstream of cGMP-activated PKG kinase. Plays a central role in host erythrocytes and hepatocytes infection cycles. During the liver stage, involved in sporozoite motility and thus in sporozoite invasion of host hepatocytes, probably together with CDPK1 and CDPK4. Involved in merosome egress from host hepatocytes, probably together with CDPK4. Required for the release of hepatic merozoites from merosomes in the host blood stream. During the asexual blood stage, required for merozoite egress from host erythrocytes by triggering microneme secretion. Phosphorylates transporter NPT1 at late schizont stage. The protein is Calcium-dependent protein kinase 5 of Plasmodium falciparum (isolate 3D7).